The chain runs to 188 residues: Protein GrpE (188 aa).

Over residues 1–16 (MEERNEQVVEEVKEAQ) the composition is skewed to basic and acidic residues. A disordered region spans residues 1–31 (MEERNEQVVEEVKEAQVEEAVTPENSEETVE).

It belongs to the GrpE family. In terms of assembly, homodimer.

The protein localises to the cytoplasm. In terms of biological role, participates actively in the response to hyperosmotic and heat shock by preventing the aggregation of stress-denatured proteins, in association with DnaK and GrpE. It is the nucleotide exchange factor for DnaK and may function as a thermosensor. Unfolded proteins bind initially to DnaJ; upon interaction with the DnaJ-bound protein, DnaK hydrolyzes its bound ATP, resulting in the formation of a stable complex. GrpE releases ADP from DnaK; ATP binding to DnaK triggers the release of the substrate protein, thus completing the reaction cycle. Several rounds of ATP-dependent interactions between DnaJ, DnaK and GrpE are required for fully efficient folding. The chain is Protein GrpE from Bacillus cereus (strain G9842).